The following is a 313-amino-acid chain: MSGKIQDGVAIRRMSDAILFFTNYTSRNLIDQRDITLSTLHTIRRNLGTCWSIALLNCWNETSSHAGVMRFILDIAFSLRFGDFTMLGACGNVDPFDDAGQIFLKSCKATGRNDSCFLTPSDNFGYYLVSFLNKEQLKCVVDMNVGIHNIEDIYVTRMESIMEFIYYYYTESGRDVVNWLEKLESADAGLAAHAKSKRLMRAEIDLIRREILERTRLFINSNRNSFHDHHRELVRRYRTIWADVISDGDVAEETSTEATTSAQHSTALSAELDEVDEYDHPNDGLLTFRREEDAASNLDSLLGSLSGEDAFQG.

This sequence belongs to the phytoreovirus minor outer capsid protein P9 family.

Its subcellular location is the virion. It localises to the host cytoplasm. Minor outer capsid protein. The sequence is that of Minor outer capsid protein P9 from Catharanthus roseus (Madagascar periwinkle).